Reading from the N-terminus, the 298-residue chain is Chromatin modification-related protein YNG2 (298 aa).

Residues 20–86 are a coiled coil; sequence EVRHLLEEIK…KLVQKLQKEK (67 aa). Residues 140 to 158 are compositionally biased toward polar residues; it reads GFSDSASATPTPRNGSSAT. The disordered stretch occupies residues 140 to 206; it reads GFSDSASATP…EEIEDPLPYE (67 aa). Residues 174–188 show a composition bias toward low complexity; it reads VKGASSSSAQSSSAS. Residues 237–288 form a PHD-type zinc finger; that stretch reads NLYCFCQRVSFGEMIGCDNEDCKYEWFHWSCVGITSPPKDDEIWYCPDCASK. Residues cysteine 240, cysteine 242, cysteine 253, cysteine 258, histidine 264, cysteine 267, cysteine 282, and cysteine 285 each coordinate Zn(2+).

It belongs to the ING family. In terms of assembly, interacts with H3K4me3 and to a lesser extent with H3K4me2. Component of the NuA4 histone acetyltransferase complex.

It is found in the nucleus. Component of the NuA4 histone acetyltransferase complex which is involved in transcriptional activation of selected genes principally by acetylation of nucleosomal histone H4 and H2A. The NuA4 complex is also involved in DNA repair. Involved in cell cycle progression and meiosis. This chain is Chromatin modification-related protein YNG2 (YNG2), found in Candida albicans (strain SC5314 / ATCC MYA-2876) (Yeast).